The chain runs to 234 residues: Small ribosomal subunit protein uS10m (234 aa).

Residues 1 to 23 (MLRIGYRGFSTRSRVFKLSPQEY) constitute a mitochondrion transit peptide.

The protein belongs to the universal ribosomal protein uS10 family. Component of the mitochondrial small ribosomal subunit (mt-SSU).

It localises to the mitochondrion. Component of the mitochondrial ribosome (mitoribosome), a dedicated translation machinery responsible for the synthesis of mitochondrial genome-encoded proteins, including at least some of the essential transmembrane subunits of the mitochondrial respiratory chain. The mitoribosomes are attached to the mitochondrial inner membrane and translation products are cotranslationally integrated into the membrane. The sequence is that of Small ribosomal subunit protein uS10m (RSM10) from Candida albicans (strain SC5314 / ATCC MYA-2876) (Yeast).